We begin with the raw amino-acid sequence, 134 residues long: Profilin-2 (134 aa).

A disulfide bridge connects residues Cys-13 and Cys-118. The Involved in PIP2 interaction motif lies at 84–100 (AVIRGKKGSGGITIKKT). At Thr-114 the chain carries Phosphothreonine.

Belongs to the profilin family. As to quaternary structure, occurs in many kinds of cells as a complex with monomeric actin in a 1:1 ratio. In terms of processing, phosphorylated by MAP kinases.

The protein localises to the cytoplasm. The protein resides in the cytoskeleton. Its function is as follows. Binds to actin and affects the structure of the cytoskeleton. At high concentrations, profilin prevents the polymerization of actin, whereas it enhances it at low concentrations. The chain is Profilin-2 from Olea europaea (Common olive).